A 414-amino-acid polypeptide reads, in one-letter code: 2,3-diketo-5-methylthiopentyl-1-phosphate enolase (414 aa).

Catalysis depends on Lys-99, which acts as the Proton acceptor. Substrate contacts are provided by residues Lys-148, 174–177 (KDDE), His-265, Gly-338, and 360–361 (GG). Mg(2+) contacts are provided by Lys-174, Asp-176, and Glu-177. An N6-carboxylysine modification is found at Lys-174.

The protein belongs to the RuBisCO large chain family. Type IV subfamily. In terms of assembly, homodimer. It depends on Mg(2+) as a cofactor.

It carries out the reaction 5-methylsulfanyl-2,3-dioxopentyl phosphate = 2-hydroxy-5-methylsulfanyl-3-oxopent-1-enyl phosphate. The protein operates within amino-acid biosynthesis; L-methionine biosynthesis via salvage pathway; L-methionine from S-methyl-5-thio-alpha-D-ribose 1-phosphate: step 3/6. In terms of biological role, catalyzes the enolization of 2,3-diketo-5-methylthiopentyl-1-phosphate (DK-MTP-1-P) into 2-hydroxy-3-keto-5-methylthiopentenyl-1-phosphate (HK-MTPenyl-1-P). The chain is 2,3-diketo-5-methylthiopentyl-1-phosphate enolase from Bacillus cereus (strain Q1).